A 355-amino-acid polypeptide reads, in one-letter code: cGAMP-activated phospholipase (355 aa).

One can recognise a PNPLA domain in the interval 17 to 214; that stretch reads LSLNGGGARG…VANNPSFIGL (198 aa). Positions 21–26 match the GXGXXG motif; it reads GGGARG. The GXSXG motif lies at 60–64; that stretch reads GTSIG. The active-site Nucleophile is Ser62. The active-site Proton acceptor is the Asp201. A DGA/G motif is present at residues 201 to 203; the sequence is DGG.

The protein belongs to the patatin family.

It carries out the reaction a 1,2-diacyl-sn-glycero-3-phosphocholine + H2O = a 2-acyl-sn-glycero-3-phosphocholine + a fatty acid + H(+). The enzyme catalyses 1,2-di-(9Z-octadecenoyl)-sn-glycero-3-phosphoethanolamine + 2 H2O = sn-glycero-3-phosphoethanolamine + 2 (9Z)-octadecenoate + 2 H(+). Phospholipase activity is specifically activated upon 3',3'-cGAMP (cGAMP) binding. Is not activated by the other cyclic dinucleotides 3',3'-cUAMP, 3',3'-c-diAMP and 3',3'-c-diGMP. Therefore, is specifically activated by only the nucleotide synthesized from its adjacently encoded nucleotidyltransferase (DncV). The cGAMP-activation of lipase is inhibited by T4 phage protein Acb2 (Vs.4). Its function is as follows. Effector phospholipase of a CBASS antiviral system. CBASS (cyclic oligonucleotide-based antiphage signaling system) provides immunity against bacteriophages. The CD-NTase protein (DncV) synthesizes cyclic nucleotides in response to infection; these serve as specific second messenger signals. The signals activate a diverse range of effectors, leading to bacterial cell death and thus abortive phage infection. A type II-A(GA) CBASS system. Phospholipase that is activated upon binding to the cyclic dinucleotide (CDN) second messenger 3',3'-cyclic GMP-AMP (3',3'-cGAMP). Then degrades phosphatidylethanolamine (PE) and phosphatidylglycerol (PG), the major phospholipids in the cell membrane of V.cholerae, releasing 16:1 and 18:1 free fatty acids. Upon expression in E.coli with cognate DncV, the cell inner membrane shrinks and separates from the cell wall. Functionally, protects E.coli against phage infection. When the CBASS operon (capV-dncV-cap2-cap3) is introduced in E.coli MG1655 there is about 100-fold protection against phages P1 and T2. When the operon is introduced in E.coli MG1655 there is a more than 10(3) decrease in the efficiency of T2 plaque formation. Protects 100-fold against phage T5, offers no protection against T7. When the operon is introduced in E.coli MG1655 it protects against phages T2, T4, T5 and T6. Another paper shows the operon confers protection against phages P1, T2, T5 and T6 but not T4 or lambda. In Vibrio cholerae serotype O1 (strain ATCC 39315 / El Tor Inaba N16961), this protein is cGAMP-activated phospholipase.